A 232-amino-acid polypeptide reads, in one-letter code: Fibrillarin-like rRNA/tRNA 2'-O-methyltransferase (232 aa).

S-adenosyl-L-methionine-binding positions include Thr-89 to Thr-90, Glu-108 to Phe-109, Asp-133 to Ala-134, and Asp-153 to Gln-156.

Belongs to the methyltransferase superfamily. Fibrillarin family. As to quaternary structure, interacts with nop5. Component of box C/D small ribonucleoprotein (sRNP) particles that contain rpl7ae, FlpA and nop5, plus a guide RNA.

Functionally, involved in pre-rRNA and tRNA processing. Utilizes the methyl donor S-adenosyl-L-methionine to catalyze the site-specific 2'-hydroxyl methylation of ribose moieties in rRNA and tRNA. Site specificity is provided by a guide RNA that base pairs with the substrate. Methylation occurs at a characteristic distance from the sequence involved in base pairing with the guide RNA. In Saccharolobus islandicus (strain M.16.27) (Sulfolobus islandicus), this protein is Fibrillarin-like rRNA/tRNA 2'-O-methyltransferase.